The primary structure comprises 220 residues: Translation initiation factor 6 (220 aa).

The protein belongs to the eIF-6 family.

In terms of biological role, binds to the 50S ribosomal subunit and prevents its association with the 30S ribosomal subunit to form the 70S initiation complex. This is Translation initiation factor 6 from Methanoculleus marisnigri (strain ATCC 35101 / DSM 1498 / JR1).